Here is a 185-residue protein sequence, read N- to C-terminus: uncharacterized protein (185 aa).

Transmembrane regions (helical) follow at residues 32–52 (LIFV…LLAF), 66–86 (LVTL…VLAV), and 155–175 (IGYG…FLVV).

The protein localises to the cell membrane. This is an uncharacterized protein from Bacillus subtilis (strain 168).